A 217-amino-acid chain; its full sequence is Ribonuclease T (217 aa).

The region spanning 20 to 195 is the Exonuclease domain; that stretch reads VVVDVETAGF…YDTEKTAELF (176 aa). Mg(2+)-binding residues include Asp23, Glu25, His182, and Asp187. The active-site Proton donor/acceptor is His182.

Belongs to the RNase T family. As to quaternary structure, homodimer. Mg(2+) is required as a cofactor.

Functionally, trims short 3' overhangs of a variety of RNA species, leaving a one or two nucleotide 3' overhang. Responsible for the end-turnover of tRNA: specifically removes the terminal AMP residue from uncharged tRNA (tRNA-C-C-A). Also appears to be involved in tRNA biosynthesis. This is Ribonuclease T from Vibrio vulnificus (strain YJ016).